The sequence spans 157 residues: Cyclic pyranopterin monophosphate synthase (157 aa).

Residues methionine 74–histidine 76 and methionine 112–glutamate 113 contribute to the substrate site. Aspartate 127 is an active-site residue.

Belongs to the MoaC family. In terms of assembly, homohexamer; trimer of dimers.

It catalyses the reaction (8S)-3',8-cyclo-7,8-dihydroguanosine 5'-triphosphate = cyclic pyranopterin phosphate + diphosphate. Its pathway is cofactor biosynthesis; molybdopterin biosynthesis. Catalyzes the conversion of (8S)-3',8-cyclo-7,8-dihydroguanosine 5'-triphosphate to cyclic pyranopterin monophosphate (cPMP). This is Cyclic pyranopterin monophosphate synthase from Campylobacter jejuni subsp. jejuni serotype O:2 (strain ATCC 700819 / NCTC 11168).